A 168-amino-acid chain; its full sequence is Peptidoglycan-associated lipoprotein (168 aa).

The signal sequence occupies residues 1–24 (MRRIQSIARSPIAIALFMSLAVAG). Cys-25 carries the N-palmitoyl cysteine lipid modification. The S-diacylglycerol cysteine moiety is linked to residue Cys-25. In terms of domain architecture, OmpA-like spans 51 to 167 (QDFTVNVGDR…RAVTVLNGAG (117 aa)).

This sequence belongs to the Pal lipoprotein family. In terms of assembly, the Tol-Pal system is composed of five core proteins: the inner membrane proteins TolA, TolQ and TolR, the periplasmic protein TolB and the outer membrane protein Pal. They form a network linking the inner and outer membranes and the peptidoglycan layer. In terms of processing, the N-terminus is blocked.

It is found in the cell outer membrane. Its function is as follows. Part of the Tol-Pal system, which plays a role in outer membrane invagination during cell division and is important for maintaining outer membrane integrity. The polypeptide is Peptidoglycan-associated lipoprotein (Brucella abortus biovar 1 (strain 9-941)).